The sequence spans 170 residues: Zinc finger A20 and AN1 domain-containing stress-associated protein 6 (170 aa).

The segment at 10 to 44 (PESNRLCVNNCGFLGSSATMNLCSNCYGDLCLKQQ) adopts an A20-type zinc-finger fold. 4 residues coordinate Zn(2+): Cys-16, Cys-20, Cys-32, and Cys-35. The segment at 53-76 (TVESSLSVSPPSSSSSEISSPIIP) is disordered. The segment at 105-151 (QQRPNRCTTCRKRVGLTGFKCRCGTMFCGVHRYPEIHGCSYDFKSAG) adopts an AN1-type zinc-finger fold. Positions 111, 114, 125, 127, 132, 135, 141, and 143 each coordinate Zn(2+).

In terms of biological role, may be involved in environmental stress response. This chain is Zinc finger A20 and AN1 domain-containing stress-associated protein 6 (SAP6), found in Arabidopsis thaliana (Mouse-ear cress).